A 162-amino-acid polypeptide reads, in one-letter code: Retinoic acid receptor responder protein 2 (162 aa).

The first 20 residues, 1-20 (MKCLLISLALWLGTVGTRGT), serve as a signal peptide directing secretion. 3 disulfides stabilise this stretch: Cys-79-Cys-89, Cys-100-Cys-119, and Cys-103-Cys-134. Residues 157–162 (RALRTK) constitute a propeptide that is removed on maturation.

Post-translationally, secreted in an inactive precursor form, prochemerin, which is proteolytically processed by a variety of extracellular proteases to generate forms with differing levels of bioactivity. For example, the removal of six amino acids results in chemerin-156, which exhibits the highest activity, while removal of seven amino acids results in chemerin-155 which has slightly less activity. Some proteases are able to cleave at more than one site and chemerin forms may be sequentially processed by different enzymes to modulate activity levels. The coordinated expression and activity of chemerin-modifying enzymes is essential for regulating its bioactivation, inactivation and, consequently, biological function. Cathepsin G cleaves seven C-terminal amino acids from prochemerin (chemerin-155), elastase is able to cleave six (chemerin-156), eight (chemerin-154) or eleven (chemerin-151), plasmin cleaves five amino acids (chemerin-157), and tryptase cleaves five (chemerin-157) or eight (chemerin-154). Multiple cleavages might be required to fully activate chemerin, with an initial tryptase cleavage resulting in chemerin with low activity (chemerin-157), and a second cleavage by carboxypeptidase N or B producing highly active chemerin (chemerin-156). In terms of tissue distribution, expressed in the differentiated adipocytes (at protein level). Abundantly expressed in the liver, adipose tissue including visceral, epididymal, and brown adipose tissue.

Its subcellular location is the secreted. In terms of biological role, adipocyte-secreted protein (adipokine) that regulates adipogenesis, metabolism and inflammation through activation of the chemokine-like receptor 1 (CMKLR1). Also acts as a ligand for CMKLR2. Can also bind to C-C chemokine receptor-like 2 (CCRL2), but with a lower affinity than it does to CMKLR1 or CMKLR2. Positively regulates adipocyte differentiation, modulates the expression of adipocyte genes involved in lipid and glucose metabolism and might play a role in angiogenesis, a process essential for the expansion of white adipose tissue. Also acts as a pro-inflammatory adipokine, causing an increase in secretion of pro-inflammatory and prodiabetic adipokines, which further impair adipose tissue metabolic function and have negative systemic effects including impaired insulin sensitivity, altered glucose and lipid metabolism, and a decrease in vascular function in other tissues. Can have both pro- and anti-inflammatory properties depending on the modality of enzymatic cleavage by different classes of proteases. Acts as a chemotactic factor for leukocyte populations expressing CMKLR1, particularly immature plasmacytoid dendritic cells, but also immature myeloid DCs, macrophages and natural killer cells. Exerts an anti-inflammatory role by preventing TNF/TNFA-induced VCAM1 expression and monocytes adhesion in vascular endothelial cells. The effect is mediated via inhibiting activation of NF-kappa-B and CRK/p38 through stimulation of AKT1/NOS3 signaling and nitric oxide production. Exhibits an antimicrobial function in the skin. In Mus musculus (Mouse), this protein is Retinoic acid receptor responder protein 2 (Rarres2).